Reading from the N-terminus, the 118-residue chain is Basic phospholipase A2 nigroxin A (118 aa).

7 disulfides stabilise this stretch: cysteine 11/cysteine 70, cysteine 25/cysteine 117, cysteine 27/cysteine 43, cysteine 42/cysteine 98, cysteine 49/cysteine 91, cysteine 59/cysteine 84, and cysteine 77/cysteine 89. Residues tyrosine 26, glycine 28, and glycine 30 each contribute to the Ca(2+) site. Residue histidine 46 is part of the active site. Aspartate 47 lines the Ca(2+) pocket. Aspartate 92 is an active-site residue.

The protein belongs to the phospholipase A2 family. Group I subfamily. D49 sub-subfamily. Requires Ca(2+) as cofactor. In terms of tissue distribution, expressed by the venom gland.

Its subcellular location is the secreted. The enzyme catalyses a 1,2-diacyl-sn-glycero-3-phosphocholine + H2O = a 1-acyl-sn-glycero-3-phosphocholine + a fatty acid + H(+). Its function is as follows. Snake venom phospholipase A2 (PLA2) that has only a weak enzymatic activity. It has a myotoxic activity in vivo (dystrophic effect). PLA2 catalyzes the calcium-dependent hydrolysis of the 2-acyl groups in 3-sn-phosphoglycerides. This is Basic phospholipase A2 nigroxin A from Micrurus nigrocinctus (Central American coral snake).